The primary structure comprises 474 residues: AAA-ATPase At3g28610 (474 aa).

The first 25 residues, 1–25 (MMGNMFGSSLASLFFLWATIQQIFP), serve as a signal peptide directing secretion. 244 to 251 (GPPGTGKS) is a binding site for ATP.

It belongs to the AAA ATPase family. BCS1 subfamily. It depends on Mg(2+) as a cofactor.

It carries out the reaction ATP + H2O = ADP + phosphate + H(+). This is AAA-ATPase At3g28610 from Arabidopsis thaliana (Mouse-ear cress).